A 138-amino-acid polypeptide reads, in one-letter code: Large ribosomal subunit protein uL16 (138 aa).

It belongs to the universal ribosomal protein uL16 family. As to quaternary structure, part of the 50S ribosomal subunit.

Binds 23S rRNA and is also seen to make contacts with the A and possibly P site tRNAs. This Chlamydia felis (strain Fe/C-56) (Chlamydophila felis) protein is Large ribosomal subunit protein uL16.